We begin with the raw amino-acid sequence, 624 residues long: Translocator protein BipB (624 aa).

The disordered stretch occupies residues 54-99 (LASEQCDAQPVTDDARLDRLDDKPALRAPRSDAAHAADGNARGNGG). Basic and acidic residues predominate over residues 66–88 (DDARLDRLDDKPALRAPRSDAAH). The stretch at 313-343 (EMQAKREAELQKKSDEYQEQVKKAEEMQKTM) forms a coiled coil. 3 helical membrane-spanning segments follow: residues 359–379 (FAAAAFTGGASLALAAVGLAL), 405–425 (AILKPLMEVISSLITKALVAC), and 434–454 (LAGAILGAVVTGVALVAAAFV).

This sequence belongs to the SctE/SipB/YopB family.

The protein localises to the secreted. The protein resides in the host membrane. Its function is as follows. Plays a role in the bacterium-induced formation of multinucleated giant cell (MNGC), which is formed after host cell fusion, as well as in the intercellular spreading of bacteria and in the induction of apoptosis in macrophages. May act in concert with other effector proteins to induce fusion of host cell membranes. This is Translocator protein BipB (bipB) from Burkholderia thailandensis (strain ATCC 700388 / DSM 13276 / CCUG 48851 / CIP 106301 / E264).